A 145-amino-acid chain; its full sequence is MSKGKVLLVLYEGGKHAEEQEKLLGCIENELGIRNFIEEQGYELVTTIDKDPEPTSTVDRELKDAEIVITTPFFPAYISRNRIAEAPNLKLCVTAGVGSDHVDLEAANERKITVTEVTGSNVVSVAEHVMATILVLIRNYNGGHQ.

The substrate site is built by Val97 and Asn121.

This sequence belongs to the D-isomer specific 2-hydroxyacid dehydrogenase family. FDH subfamily.

This is an uncharacterized protein from Saccharomyces cerevisiae (strain ATCC 204508 / S288c) (Baker's yeast).